Reading from the N-terminus, the 84-residue chain is Small ribosomal subunit protein uS17 (84 aa).

The protein belongs to the universal ribosomal protein uS17 family. As to quaternary structure, part of the 30S ribosomal subunit.

In terms of biological role, one of the primary rRNA binding proteins, it binds specifically to the 5'-end of 16S ribosomal RNA. This is Small ribosomal subunit protein uS17 from Vibrio cholerae serotype O1 (strain ATCC 39541 / Classical Ogawa 395 / O395).